An 89-amino-acid chain; its full sequence is UPF0367 protein CYA_1023 (89 aa).

A disordered region spans residues 69-89 (TKSGGPGAPGTRPGFLAQLQG).

It belongs to the UPF0367 family.

This chain is UPF0367 protein CYA_1023, found in Synechococcus sp. (strain JA-3-3Ab) (Cyanobacteria bacterium Yellowstone A-Prime).